The following is a 272-amino-acid chain: Glutamate racemase (272 aa).

Substrate-binding positions include 16-17 (DS) and 48-49 (YG). The Proton donor/acceptor role is filled by C79. Residue 80–81 (NT) participates in substrate binding. Residue C191 is the Proton donor/acceptor of the active site. Residue 192 to 193 (TH) participates in substrate binding.

This sequence belongs to the aspartate/glutamate racemases family.

It catalyses the reaction L-glutamate = D-glutamate. It participates in cell wall biogenesis; peptidoglycan biosynthesis. In terms of biological role, provides the (R)-glutamate required for cell wall biosynthesis. The sequence is that of Glutamate racemase from Chlorobium phaeobacteroides (strain DSM 266 / SMG 266 / 2430).